The sequence spans 196 residues: Large ribosomal subunit protein eL15 (196 aa).

2 stretches are compositionally biased toward basic residues: residues 160 to 172 (ATRG…RKGR) and 186 to 196 (PSIRAHKSRGK). The disordered stretch occupies residues 160-196 (ATRGKTSAGRKGRGMSTRGKGTEKTRPSIRAHKSRGK).

It belongs to the eukaryotic ribosomal protein eL15 family.

This is Large ribosomal subunit protein eL15 (rpl15e) from Methanosarcina mazei (strain ATCC BAA-159 / DSM 3647 / Goe1 / Go1 / JCM 11833 / OCM 88) (Methanosarcina frisia).